Here is a 487-residue protein sequence, read N- to C-terminus: GTPase Der (487 aa).

The region spanning 2-166 (LKIAILGRPN…RIKLVANLPE (165 aa)) is the EngA-type G 1 domain. Residues 8–15 (GRPNVGKS), 55–59 (DTGGV), and 118–121 (NKAD) contribute to the GTP site. The disordered stretch occupies residues 165-194 (PEPREEEEEGLEELSVDEHEESEAALPSNT). Positions 168–187 (REEEEEGLEELSVDEHEESE) are enriched in acidic residues. The 174-residue stretch at 225–398 (LKIALIGRPN…AIDELHHVVS (174 aa)) folds into the EngA-type G 2 domain. GTP is bound by residues 231 to 238 (GRPNVGKS), 278 to 282 (DTAGL), and 343 to 346 (NKWD). Residues 399-483 (NKVPTPIVNK…PFDLEFKEKP (85 aa)) enclose the KH-like domain.

It belongs to the TRAFAC class TrmE-Era-EngA-EngB-Septin-like GTPase superfamily. EngA (Der) GTPase family. Associates with the 50S ribosomal subunit.

In terms of biological role, GTPase that plays an essential role in the late steps of ribosome biogenesis. The chain is GTPase Der from Chlamydia pneumoniae (Chlamydophila pneumoniae).